The primary structure comprises 514 residues: 2,3-bisphosphoglycerate-independent phosphoglycerate mutase (514 aa).

Aspartate 14 and serine 64 together coordinate Mn(2+). Serine 64 functions as the Phosphoserine intermediate in the catalytic mechanism. Residues histidine 125, 155–156, arginine 187, arginine 193, 263–266, and lysine 336 each bind substrate; these read RD and RADR. Aspartate 403, histidine 407, aspartate 444, histidine 445, and histidine 463 together coordinate Mn(2+).

This sequence belongs to the BPG-independent phosphoglycerate mutase family. Monomer. The cofactor is Mn(2+).

The catalysed reaction is (2R)-2-phosphoglycerate = (2R)-3-phosphoglycerate. Its pathway is carbohydrate degradation; glycolysis; pyruvate from D-glyceraldehyde 3-phosphate: step 3/5. Insensitive to vanadate. Its function is as follows. Catalyzes the interconversion of 2-phosphoglycerate (2-PGA) and 3-phosphoglycerate (3-PGA). This chain is 2,3-bisphosphoglycerate-independent phosphoglycerate mutase, found in Escherichia coli (strain K12).